Here is a 374-residue protein sequence, read N- to C-terminus: Alcohol dehydrogenase class-3 (374 aa).

S2 carries the post-translational modification N-acetylserine. C45, H67, C97, C100, C103, C111, and C174 together coordinate Zn(2+). K233 bears the N6-succinyllysine mark. S247 carries the post-translational modification Phosphoserine. K315 is modified (N6-succinyllysine). Phosphoserine occurs at positions 324 and 351.

Belongs to the zinc-containing alcohol dehydrogenase family. Class-III subfamily. Homodimer. Requires Zn(2+) as cofactor.

It localises to the cytoplasm. The catalysed reaction is a primary alcohol + NAD(+) = an aldehyde + NADH + H(+). The enzyme catalyses a secondary alcohol + NAD(+) = a ketone + NADH + H(+). It carries out the reaction S-(hydroxymethyl)glutathione + NADP(+) = S-formylglutathione + NADPH + H(+). It catalyses the reaction S-(hydroxymethyl)glutathione + NAD(+) = S-formylglutathione + NADH + H(+). The catalysed reaction is 20-oxo-(5Z,8Z,11Z,14Z)-eicosatetraenoate + NAD(+) + H2O = (5Z,8Z,11Z,14Z)-eicosatetraenedioate + NADH + 2 H(+). The enzyme catalyses 20-hydroxy-(5Z,8Z,11Z,14Z)-eicosatetraenoate + NAD(+) = 20-oxo-(5Z,8Z,11Z,14Z)-eicosatetraenoate + NADH + H(+). It carries out the reaction S-nitrosoglutathione + NADH + H(+) = S-(hydroxysulfenamide)glutathione + NAD(+). Functionally, catalyzes the oxidation of long-chain primary alcohols and the oxidation of S-(hydroxymethyl) glutathione. Also oxidizes long chain omega-hydroxy fatty acids, such as 20-HETE, producing both the intermediate aldehyde, 20-oxoarachidonate and the end product, a dicarboxylic acid, (5Z,8Z,11Z,14Z)-eicosatetraenedioate. Class-III ADH is remarkably ineffective in oxidizing ethanol. Required for clearance of cellular formaldehyde, a cytotoxic and carcinogenic metabolite that induces DNA damage. Also acts as a S-nitroso-glutathione reductase by catalyzing the NADH-dependent reduction of S-nitrosoglutathione, thereby regulating protein S-nitrosylation. This Equus caballus (Horse) protein is Alcohol dehydrogenase class-3.